A 588-amino-acid polypeptide reads, in one-letter code: L-fucose isomerase (588 aa).

Residues E335 and D359 each act as proton acceptor in the active site. Residues E335, D359, and H525 each coordinate Mn(2+).

It belongs to the L-fucose isomerase family. It depends on Mn(2+) as a cofactor.

The protein localises to the cytoplasm. It carries out the reaction L-fucose = L-fuculose. It participates in carbohydrate degradation; L-fucose degradation; L-lactaldehyde and glycerone phosphate from L-fucose: step 1/3. Functionally, converts the aldose L-fucose into the corresponding ketose L-fuculose. The protein is L-fucose isomerase of Streptococcus pneumoniae (strain P1031).